We begin with the raw amino-acid sequence, 241 residues long: Small ribosomal subunit protein uS2c (241 aa).

It belongs to the universal ribosomal protein uS2 family.

It localises to the plastid. It is found in the chloroplast. In Porphyra purpurea (Red seaweed), this protein is Small ribosomal subunit protein uS2c (rps2).